Here is a 101-residue protein sequence, read N- to C-terminus: MGTPELKIILEFSAGAELLFGNIKRRELTLDGNQKWTIANLLKWMHANILTERPELFLQEDTVRPGILVLINDTDWELLGELDYELQPNDNVLFISTLHGG.

Gly-101 is subject to 1-thioglycine. Gly-101 is covalently cross-linked (Glycyl lysine isopeptide (Gly-Lys) (interchain with K-? in acceptor proteins)).

It belongs to the URM1 family. In terms of assembly, interacts with cer. C-terminal thiocarboxylation occurs in 2 steps, it is first acyl-adenylated (-COAMP) via the hesA/moeB/thiF part of the MOCS3 homolog, then thiocarboxylated (-COSH) via the rhodanese domain of the MOCS3 homolog.

The protein localises to the cytoplasm. Its pathway is tRNA modification; 5-methoxycarbonylmethyl-2-thiouridine-tRNA biosynthesis. Acts as a sulfur carrier required for 2-thiolation of mcm(5)S(2)U at tRNA wobble positions of cytosolic tRNA(Lys), tRNA(Glu) and tRNA(Gln). Serves as sulfur donor in tRNA 2-thiolation reaction by being thiocarboxylated (-COSH) at its C-terminus by MOCS3. The sulfur is then transferred to tRNA to form 2-thiolation of mcm(5)S(2)U. Also acts as a ubiquitin-like protein (UBL) that is covalently conjugated via an isopeptide bond to lysine residues of target proteins such as Prx2/Jafrac1, Ciao1, Eip71CD and GILT1. The thiocarboxylated form serves as substrate for conjugation and oxidative stress specifically induces the formation of UBL-protein conjugates. This chain is Ubiquitin-related modifier 1 homolog, found in Drosophila sechellia (Fruit fly).